The sequence spans 845 residues: Translation initiation factor IF-2 (845 aa).

The segment at 1 to 260 is disordered; that stretch reads MSDEQDKPTL…HMTSSGPREK (260 aa). The span at 68–81 shows a compositional bias: pro residues; sequence APAPAPAAPRPAAP. Basic and acidic residues predominate over residues 101 to 140; the sequence is REAEEARMAALEENRRREEAERARAAEEERARAEKREEQA. Low complexity-rich tracts occupy residues 141–166 and 173–191; these read ATKAPEPAPTPAASAPDATAADAPPA and TAARPATASAAPAPRRFTP. A compositionally biased stretch (basic and acidic residues) spans 194-215; it reads ALKRPEPKRPEPKASRGGENRR. The 171-residue stretch at 344-514 folds into the tr-type G domain; the sequence is PRAPVVTIMG…ALQAEIMELK (171 aa). Positions 353 to 360 are G1; the sequence is GHVDHGKT. 353–360 provides a ligand contact to GTP; the sequence is GHVDHGKT. The tract at residues 378-382 is G2; it reads GITQH. Residues 400–403 are G3; sequence DTPG. Residues 400 to 404 and 454 to 457 contribute to the GTP site; these read DTPGH and NKVD. The interval 454 to 457 is G4; it reads NKVD. Residues 490–492 are G5; that stretch reads SAL.

This sequence belongs to the TRAFAC class translation factor GTPase superfamily. Classic translation factor GTPase family. IF-2 subfamily.

The protein resides in the cytoplasm. One of the essential components for the initiation of protein synthesis. Protects formylmethionyl-tRNA from spontaneous hydrolysis and promotes its binding to the 30S ribosomal subunits. Also involved in the hydrolysis of GTP during the formation of the 70S ribosomal complex. The sequence is that of Translation initiation factor IF-2 from Sphingopyxis alaskensis (strain DSM 13593 / LMG 18877 / RB2256) (Sphingomonas alaskensis).